Consider the following 1051-residue polypeptide: Ubiquitin carboxyl-terminal hydrolase 28 (1051 aa).

The interval 60-82 is disordered; the sequence is DQRVKEPSHDTTAAEPSEVEESA. A Phosphoserine modification is found at Ser67. Residues 97-116 form the UIM domain; it reads DNKDDLQAAIALSLLESPNI. Residue Lys99 forms a Glycyl lysine isopeptide (Lys-Gly) (interchain with G-Cter in SUMO2) linkage. The span at 121 to 135 shows a compositional bias: basic and acidic residues; the sequence is RDLNRAHEANSAETK. Positions 121-140 are disordered; that stretch reads RDLNRAHEANSAETKRSKRK. The USP domain occupies 162–655; that stretch reads VGLKNVGNTC…SAYCLMYIND (494 aa). Catalysis depends on Cys171, which acts as the Nucleophile. Ser376 is modified (phosphoserine). The disordered stretch occupies residues 483-538; it reads DLTPKESSSPESCSQNAGSTFSSPEDALPSSEGMNGPFTSPHSSLETPAPPAPRTV. Polar residues-rich tracts occupy residues 487-505 and 519-528; these read KESS…TFSS and PFTSPHSSLE. Ser555 bears the Phosphoserine mark. The active-site Proton acceptor is His605. Residues 703-735 form a disordered region; sequence EEQSCKIPQMESSPNSSSQDFSTSQESPAVSSH. Over residues 713 to 730 the composition is skewed to low complexity; that stretch reads ESSPNSSSQDFSTSQESP. Ser720 is subject to Phosphoserine. Thr1022 bears the Phosphothreonine mark.

The protein belongs to the peptidase C19 family. USP28 subfamily. In terms of assembly, interacts with ZNF304. Interacts with PRKD1. Interacts with TP53BP1. Interacts with FBXW7; following DNA damage, dissociates from FBXW7 leading to degradation of MYC. In terms of processing, degraded upon nickel ion level or hypoxia exposure. Post-translationally, phosphorylated upon DNA damage at Ser-67 and Ser-720, by ATM or ATR. Phosphorylated by PRKD1.

The protein localises to the nucleus. It localises to the nucleoplasm. The enzyme catalyses Thiol-dependent hydrolysis of ester, thioester, amide, peptide and isopeptide bonds formed by the C-terminal Gly of ubiquitin (a 76-residue protein attached to proteins as an intracellular targeting signal).. Functionally, deubiquitinase involved in DNA damage response checkpoint and MYC proto-oncogene stability. Involved in DNA damage induced apoptosis by specifically deubiquitinating proteins of the DNA damage pathway such as CLSPN. Also involved in G2 DNA damage checkpoint, by deubiquitinating CLSPN, and preventing its degradation by the anaphase promoting complex/cyclosome (APC/C). In contrast, it does not deubiquitinate PLK1. Specifically deubiquitinates MYC in the nucleoplasm, leading to prevent MYC degradation by the proteasome: acts by specifically interacting with FBXW7 (FBW7alpha) in the nucleoplasm and counteracting ubiquitination of MYC by the SCF(FBXW7) complex. Deubiquitinates ZNF304, hence preventing ZNF304 degradation by the proteasome and leading to the activated KRAS-mediated promoter hypermethylation and transcriptional silencing of tumor suppressor genes (TSGs) in a subset of colorectal cancers (CRC) cells. The sequence is that of Ubiquitin carboxyl-terminal hydrolase 28 (Usp28) from Mus musculus (Mouse).